The sequence spans 130 residues: Histone H2A.6 (130 aa).

Positions 1–12 (MAGRGKTLGSGG) are enriched in gly residues. The interval 1 to 23 (MAGRGKTLGSGGAKKATSRSSKA) is disordered.

It belongs to the histone H2A family. The nucleosome is a histone octamer containing two molecules each of H2A, H2B, H3 and H4 assembled in one H3-H4 heterotetramer and two H2A-H2B heterodimers. The octamer wraps approximately 147 bp of DNA. Interacts with VIP1. In terms of processing, not ubiquitinated. In terms of tissue distribution, low level of expression, mainly in dividing tissues: floral buds, margins of newly emerging leaves, expanding leaves and the meristematic zone of root tips. Also expressed in many non-dividing cells of the elongation zone of the root.

It localises to the nucleus. The protein resides in the chromosome. Its function is as follows. Core component of nucleosome. Nucleosomes wrap and compact DNA into chromatin, limiting DNA accessibility to the cellular machineries which require DNA as a template. Histones thereby play a central role in transcription regulation, DNA repair, DNA replication and chromosomal stability. DNA accessibility is regulated via a complex set of post-translational modifications of histones, also called histone code, and nucleosome remodeling. Required for the T-DNA integration step of plant transformation by Agrobacterium. May play an important role in illegitimate recombination. The polypeptide is Histone H2A.6 (RAT5) (Arabidopsis thaliana (Mouse-ear cress)).